Reading from the N-terminus, the 917-residue chain is Hexokinase HKDC1 (917 aa).

Residues 1-20 (MFAVHLMAFYFSKLKEDQIK) are mitochondrial-binding peptide (MBP). Hexokinase domains are found at residues 16–458 (EDQI…MVTA) and 464–905 (QAQR…LITA). ATP is bound by residues Arg-30 and 84–89 (DLGGSK). Positions 73-207 (DGSENGEFLS…DMDVDILALV (135 aa)) are hexokinase small subdomain 1. Position 84–91 (84–91 (DLGGSKFR)) interacts with D-glucose 6-phosphate. D-glucose is bound by residues Ser-155, 172–173 (TK), and 208–209 (ND). Residues 208–447 (NDTVGTMMTC…CDVRFLLSES (240 aa)) are hexokinase large subdomain 1. D-glucose 6-phosphate contacts are provided by Asp-209 and Thr-232. D-glucose contacts are provided by residues Asn-235, Glu-260, and 291–294 (QLFE). 413 to 415 (DGT) provides a ligand contact to D-glucose 6-phosphate. 425–426 (KR) lines the ATP pocket. D-glucose 6-phosphate contacts are provided by residues Ser-449 and 532–536 (DLGGT). A hexokinase small subdomain 2 region spans residues 521 to 654 (DGTEKGKFLA…EFDLDIVAVV (134 aa)). Position 532–537 (532–537 (DLGGTN)) interacts with ATP. D-glucose is bound by residues 602–603 (SF), 619–620 (TK), and 655–656 (ND). The interval 655 to 894 (NDTVGTMMTC…CDVTFMLSED (240 aa)) is hexokinase large subdomain 2. Residues Asp-656 and Thr-679 each contribute to the D-glucose 6-phosphate site. Thr-679 serves as a coordination point for ATP. Residues 681–682 (SN), Glu-707, and Glu-741 each bind D-glucose. Residues 746-747 (GM), 783-787 (TKFLS), and 862-866 (TLYKL) each bind ATP. Residues 860–862 (DGT) and Ser-896 each bind D-glucose 6-phosphate.

Belongs to the hexokinase family. In terms of tissue distribution, widely expressed. Highly expressed in the brush border, surface epithelium and the myenteric plexus of the small and large intestines; the acinar centrocytes and interlobular ducts of the pancreas; and the alveolar macrophages in the lungs (at protein level). Present at moderate level in the thyroid follicular epithelium (at protein level).

The protein localises to the cytoplasm. It is found in the mitochondrion membrane. The protein resides in the photoreceptor inner segment. It catalyses the reaction a D-hexose + ATP = a D-hexose 6-phosphate + ADP + H(+). The catalysed reaction is D-glucose + ATP = D-glucose 6-phosphate + ADP + H(+). It participates in carbohydrate metabolism; hexose metabolism. The protein operates within carbohydrate degradation; glycolysis; D-glyceraldehyde 3-phosphate and glycerone phosphate from D-glucose: step 1/4. Catalyzes the phosphorylation of hexose to hexose 6-phosphate, although at very low level compared to other hexokinases. Has low glucose phosphorylating activity compared to other hexokinases. Involved in glucose homeostasis and hepatic lipid accumulation. Required to maintain whole-body glucose homeostasis during pregnancy; however additional evidences are required to confirm this role. The polypeptide is Hexokinase HKDC1 (Homo sapiens (Human)).